We begin with the raw amino-acid sequence, 150 residues long: Probable NADH dehydrogenase [ubiquinone] 1 alpha subcomplex subunit 5 (150 aa).

It belongs to the complex I NDUFA5 subunit family. Complex I is composed of 45 different subunits.

It is found in the mitochondrion inner membrane. Its function is as follows. Accessory subunit of the mitochondrial membrane respiratory chain NADH dehydrogenase (Complex I), that is believed not to be involved in catalysis. Complex I functions in the transfer of electrons from NADH to the respiratory chain. The immediate electron acceptor for the enzyme is believed to be ubiquinone. The chain is Probable NADH dehydrogenase [ubiquinone] 1 alpha subcomplex subunit 5 from Caenorhabditis elegans.